The following is a 152-amino-acid chain: Globin-1 subunit beta (152 aa).

At Ser2 the chain carries N-acetylserine. In terms of domain architecture, Globin spans 12–152; sequence VSNADQKDLL…SLVAVVQAAL (141 aa). Heme b-binding residues include His72 and His104.

It belongs to the globin family. In terms of assembly, heterotetramer of two alpha chains and two beta chains.

This is Globin-1 subunit beta from Anadara trapezia (Sydney cockle).